We begin with the raw amino-acid sequence, 537 residues long: uncharacterized protein (537 aa).

Disordered stretches follow at residues 1–33, 71–98, 197–220, and 516–537; these read MEPG…ILAF, SSPP…RKRQ, SHNN…SEEK, and GRQR…EEQN. Ser-72 is modified (phosphoserine). A compositionally biased stretch (basic and acidic residues) spans 88–98; it reads SRVDSEARKRQ. Over residues 197-214 the composition is skewed to polar residues; sequence SHNNMASSNTQSNTQLSE. The segment covering 516-529 has biased composition (basic residues); that stretch reads GRQRSSRYKSHVHK.

The protein belongs to the NAD kinase family.

This is an uncharacterized protein from Schizosaccharomyces pombe (strain 972 / ATCC 24843) (Fission yeast).